Here is a 406-residue protein sequence, read N- to C-terminus: Putative odorant receptor 65b (406 aa).

Topologically, residues 1-55 (MDIQRFLKFYKVGWKTYRDPLMEASHSSIYYWREQMKAMALFTTTEERLLPYRSK) are cytoplasmic. The chain crosses the membrane as a helical span at residues 56 to 76 (WHTLVYIQMVIFFASMSFGLT). Topologically, residues 77-88 (ESMGDHVQMGRD) are extracellular. The chain crosses the membrane as a helical span at residues 89–109 (LAFILGAFFIIFKTYYFCWYG). The Cytoplasmic portion of the chain corresponds to 110–144 (DELDQVISDLDALHPWAQKGPNPVEYQTGKRWYFV). The chain crosses the membrane as a helical span at residues 145–165 (MAFFLATSWSFFLCILLLLLI). The Extracellular portion of the chain corresponds to 166-218 (TSPMWVHQQNLPFHAAFPFQWHEKSLHPISHAIIYLFQSYFAVYCLTWLLCIE). A helical membrane pass occupies residues 219–239 (GLSICIYAEITFGIEVLCLEL). The Cytoplasmic segment spans residues 240–275 (RQIHRHNYGLQELRMETNRLVKLHQKIVEILDRTND). A helical transmembrane segment spans residues 276–296 (VFHGTLIMQMGVNFSLVSLSV). Topologically, residues 297–307 (LEAVEARKDPK) are extracellular. A helical transmembrane segment spans residues 308 to 328 (VVAQFAVLMLLALGHLSMWSY). The Cytoplasmic portion of the chain corresponds to 329-381 (CGDQLSQKSLQISEAAYEAYDPTKGSKDVYRDLCVIIRRGQDPLIMRASPFPS). A helical transmembrane segment spans residues 382 to 402 (FNLINYSAILNQCYGILTFLL). The Extracellular portion of the chain corresponds to 403-406 (KTLD).

Belongs to the insect chemoreceptor superfamily. Heteromeric odorant receptor channel (TC 1.A.69) family. Or49a subfamily. Interacts with Orco. Complexes exist early in the endomembrane system in olfactory sensory neurons (OSNs), coupling these complexes to the conserved ciliary trafficking pathway.

The protein localises to the cell membrane. Odorant receptor which mediates acceptance or avoidance behavior, depending on its substrates. The odorant receptor repertoire encodes a large collection of odor stimuli that vary widely in identity, intensity, and duration. May form a complex with Orco to form odorant-sensing units, providing sensitive and prolonged odorant signaling and calcium permeability. The protein is Putative odorant receptor 65b (Or65b) of Drosophila melanogaster (Fruit fly).